A 309-amino-acid polypeptide reads, in one-letter code: NAD kinase (309 aa).

The active-site Proton acceptor is Asp89. Residues 89 to 90, 163 to 164, His174, Arg191, Asp193, and 204 to 209 each bind NAD(+); these read DG, NE, and TAYSLS.

Belongs to the NAD kinase family. A divalent metal cation is required as a cofactor.

Its subcellular location is the cytoplasm. The enzyme catalyses NAD(+) + ATP = ADP + NADP(+) + H(+). Its function is as follows. Involved in the regulation of the intracellular balance of NAD and NADP, and is a key enzyme in the biosynthesis of NADP. Catalyzes specifically the phosphorylation on 2'-hydroxyl of the adenosine moiety of NAD to yield NADP. The sequence is that of NAD kinase from Shewanella frigidimarina (strain NCIMB 400).